Here is a 698-residue protein sequence, read N- to C-terminus: FHF complex subunit HOOK-interacting protein 2B (698 aa).

It belongs to the FHIP family.

The sequence is that of FHF complex subunit HOOK-interacting protein 2B (fhip2b) from Xenopus tropicalis (Western clawed frog).